The primary structure comprises 155 residues: Endoribonuclease YbeY (155 aa).

Positions 114, 118, and 124 each coordinate Zn(2+).

The protein belongs to the endoribonuclease YbeY family. Zn(2+) is required as a cofactor.

The protein localises to the cytoplasm. In terms of biological role, single strand-specific metallo-endoribonuclease involved in late-stage 70S ribosome quality control and in maturation of the 3' terminus of the 16S rRNA. This chain is Endoribonuclease YbeY, found in Cronobacter sakazakii (strain ATCC BAA-894) (Enterobacter sakazakii).